The chain runs to 277 residues: Probable endonuclease 4 (277 aa).

Residues histidine 67, histidine 107, glutamate 142, aspartate 176, histidine 179, histidine 211, aspartate 224, histidine 226, and glutamate 256 each coordinate Zn(2+).

The protein belongs to the AP endonuclease 2 family. It depends on Zn(2+) as a cofactor.

It carries out the reaction Endonucleolytic cleavage to 5'-phosphooligonucleotide end-products.. Functionally, endonuclease IV plays a role in DNA repair. It cleaves phosphodiester bonds at apurinic or apyrimidinic (AP) sites, generating a 3'-hydroxyl group and a 5'-terminal sugar phosphate. The protein is Probable endonuclease 4 of Akkermansia muciniphila (strain ATCC BAA-835 / DSM 22959 / JCM 33894 / BCRC 81048 / CCUG 64013 / CIP 107961 / Muc).